We begin with the raw amino-acid sequence, 250 residues long: Nuclear transcription factor Y subunit C-4 (250 aa).

Residues 219–250 are disordered; that stretch reads GIAYGGQQGHPGYLWQDPQEQQEEPPAEQQSD. Residues 238–250 are compositionally biased toward acidic residues; it reads EQQEEPPAEQQSD.

Belongs to the NFYC/HAP5 subunit family. Heterotrimeric transcription factor composed of three components, NF-YA, NF-YB and NF-YC. NF-YB and NF-YC must interact and dimerize for NF-YA association and DNA binding. Interacts with NFYB2. Interacts with NFYB8, NFYB10 and HD5/NFYB11.

The protein resides in the nucleus. It is found in the cytoplasm. In terms of biological role, probable transcription factor involved in the regulation of flowering time under long day (LD) conditions. Functions as a repressor of flowering, independently of HD1 and GHD7. Controls flowering time by negatively regulating the expression of EHD1 and HD3A. Component of the NF-Y/HAP transcription factor complex. This chain is Nuclear transcription factor Y subunit C-4, found in Oryza sativa subsp. japonica (Rice).